The sequence spans 89 residues: Large ribosomal subunit protein eL34 (89 aa).

The protein belongs to the eukaryotic ribosomal protein eL34 family.

The chain is Large ribosomal subunit protein eL34 from Methanococcus maripaludis (strain C6 / ATCC BAA-1332).